A 248-amino-acid polypeptide reads, in one-letter code: Ribonuclease PH (248 aa).

Residues Arg86 and 124–126 contribute to the phosphate site; that span reads GTR.

Belongs to the RNase PH family. Homohexameric ring arranged as a trimer of dimers.

It catalyses the reaction tRNA(n+1) + phosphate = tRNA(n) + a ribonucleoside 5'-diphosphate. Its function is as follows. Phosphorolytic 3'-5' exoribonuclease that plays an important role in tRNA 3'-end maturation. Removes nucleotide residues following the 3'-CCA terminus of tRNAs; can also add nucleotides to the ends of RNA molecules by using nucleoside diphosphates as substrates, but this may not be physiologically important. Probably plays a role in initiation of 16S rRNA degradation (leading to ribosome degradation) during starvation. This chain is Ribonuclease PH, found in Clostridium perfringens (strain ATCC 13124 / DSM 756 / JCM 1290 / NCIMB 6125 / NCTC 8237 / Type A).